Consider the following 223-residue polypeptide: uncharacterized protein (223 aa).

The segment at 33–67 (CPICGGKGTLKAIQFIHRIPYFGEVMESTVVCERC) adopts a C4-type zinc-finger fold.

This sequence belongs to the ZPR1 family.

This is an uncharacterized protein from Pyrococcus horikoshii (strain ATCC 700860 / DSM 12428 / JCM 9974 / NBRC 100139 / OT-3).